We begin with the raw amino-acid sequence, 413 residues long: Snake venom metalloproteinase AaPA (413 aa).

Positions methionine 1–serine 20 are cleaved as a signal peptide. Positions isoleucine 21–threonine 189 are excised as a propeptide. The 198-residue stretch at arginine 193–proline 390 folds into the Peptidase M12B domain. Positions 196 and 280 each coordinate Ca(2+). Intrachain disulfides connect cysteine 304–cysteine 385, cysteine 344–cysteine 369, and cysteine 346–cysteine 352. Residue histidine 329 participates in Zn(2+) binding. Residue glutamate 330 is part of the active site. Zn(2+) contacts are provided by histidine 333 and histidine 339. Residues cysteine 385, asparagine 388, valine 400, asparagine 403, leucine 405, glutamate 407, and aspartate 413 each contribute to the Ca(2+) site. The propeptide occupies leucine 391–aspartate 413.

This sequence belongs to the venom metalloproteinase (M12B) family. P-I subfamily. In terms of assembly, monomer. It depends on Zn(2+) as a cofactor. As to expression, expressed by the venom gland.

It localises to the secreted. Its function is as follows. Snake venom zinc metalloprotease that may activate prothrombin. The chain is Snake venom metalloproteinase AaPA from Deinagkistrodon acutus (Hundred-pace snake).